Reading from the N-terminus, the 289-residue chain is MSTTSQTLTEAATSKFVRIKEGDLDLQLHYNDCGSGVETVVMLHGSGPGASGWANFNRNVEPLVAAGYRVVLMDCPGWSKSDPIVCSGSRSELNARALKGLLDAIGLDKVHIIGNSMGGHSAVAFALANPSRVGKLILMGGGTGGPSQFVPMPTEGIKLLQGLYREPTIDNLKKMMAVFVFDSSSLTEELYQARLDNMMSRRDHLENFVKSLAINPKQFTDYGPRLGEVTAPALVIWGRDDRFVPMDAGLRLIWGMPNAELHIFNRCGHWAQWEHADKFNRMVLDFLTH.

Residues 39–275 (TVVMLHGSGP…RCGHWAQWEH (237 aa)) form the AB hydrolase-1 domain. The Proton acceptor role is filled by His-269.

The protein belongs to the AB hydrolase superfamily. MhpC family. Homodimer.

The enzyme catalyses (2Z,4E)-2-hydroxy-6-oxonona-2,4-dienedioate + H2O = (2Z)-2-hydroxypenta-2,4-dienoate + succinate + H(+). It catalyses the reaction (2Z,4E,7E)-2-hydroxy-6-oxonona-2,4,7-trienedioate + H2O = (2Z)-2-hydroxypenta-2,4-dienoate + fumarate + H(+). It participates in aromatic compound metabolism; 3-phenylpropanoate degradation. In terms of biological role, catalyzes the cleavage of the C5-C6 bond of 2-hydroxy-6-oxononadienedioate and 2-hydroxy-6-oxononatrienedioate, a dienol ring fission product of the bacterial meta-cleavage pathway for degradation of phenylpropionic acid. This Dechloromonas aromatica (strain RCB) protein is 2-hydroxy-6-oxononadienedioate/2-hydroxy-6-oxononatrienedioate hydrolase 1.